An 815-amino-acid chain; its full sequence is MQFSESWLRTFANPEKISTDALSHSLTMAGLEVEEVGPVAPPFDKIVVAHVLSTERHPNADRLNVCQVDAGTGETLQIVCGAPNVKPGIKVPCALVGAVLPPAEAEGKPFEIKVGKLRGVESYGMLCSARELKLSEDHGGLLVLPEDAPVGQNIREYLDLDDQVFIIKLTPNKADCLSIHGVAREVSALTGATLTLPDMKPVAVTIDDKLPVKVSAPDLCGRFSGRVIRGVNARAATPAWMVQRLERSGQRSISAMVDISNYVMLELGRPSHVFDLDKIHGGLDVRWGRKGEQIKLLNGNTIEVDEQVGVIADDKEIESLAGIMGGDSTAVTLDTTNIYLEAAFWWPSAIQGRARRYNFSTDAAHRFERGVDYATTVEHIERITALILEICGGQAGPVDDHIVNLPQRRPVSLRLARAERVLGIELSSAVVADVFQRLQLPFTRSQGADGEVFEVTPPSYRFDIEIEEDLIEEVARIYGFERIAARPPVAESEMRPTNEGRRSTHVVRHALAARDYQEVINFAFVEEKWERDFAANDNPIRLLNPIASQLAVMRSSLIGGLLDKVRYNLNRKAARVRLFEVGRVFHRDADVKDGGLTVAGYHQPMMAAGIAYGPAFEEQWGITTRNVDFFDVKGDVETLFYPRVARFEPVEHPALHPGRAARMLIDGKPVGVVGEMHPRWLQEYELTQAPVLFELELDALREAGLPTYAEISKFPAAVRDLAVVVKQSVRVQDMLDSMRAALDKQGCGRFCQSLVLFDEFRPKAASAAIGADEKSLAFRVTLQDTGSTLQDETVDSAVRCMVDALGEAFQARLRG.

The region spanning 40–155 is the tRNA-binding domain; it reads APPFDKIVVA…EDAPVGQNIR (116 aa). In terms of domain architecture, B5 spans 406 to 485; sequence PQRRPVSLRL…RIYGFERIAA (80 aa). The Mg(2+) site is built by Asp463, Asp469, Glu472, and Glu473. Residues 712 to 814 form the FDX-ACB domain; the sequence is SKFPAAVRDL…LGEAFQARLR (103 aa).

The protein belongs to the phenylalanyl-tRNA synthetase beta subunit family. Type 1 subfamily. In terms of assembly, tetramer of two alpha and two beta subunits. It depends on Mg(2+) as a cofactor.

The protein localises to the cytoplasm. The catalysed reaction is tRNA(Phe) + L-phenylalanine + ATP = L-phenylalanyl-tRNA(Phe) + AMP + diphosphate + H(+). This chain is Phenylalanine--tRNA ligase beta subunit, found in Cupriavidus pinatubonensis (strain JMP 134 / LMG 1197) (Cupriavidus necator (strain JMP 134)).